A 710-amino-acid polypeptide reads, in one-letter code: Adenylosuccinate synthetase (710 aa).

2 disordered regions span residues 1-51 (MPVR…PVPQ) and 84-111 (DEPPHGSQKSLSVAPYTANASSSSGRSK). Polar residues-rich tracts occupy residues 10-27 (YNNSSPGVSNALSPSTTA) and 101-111 (ANASSSSGRSK). GTP contacts are provided by residues 180-186 (GDEGKGK) and 210-212 (GHT). The Proton acceptor role is filled by Asp181. Mg(2+)-binding residues include Asp181 and Gly210. IMP is bound by residues 181–184 (DEGK), 208–211 (NAGH), Thr295, Lys309, Gln421, Thr437, and Lys567. His211 functions as the Proton donor in the catalytic mechanism. 563-569 (AVTKKPR) provides a ligand contact to substrate. Residues Arg569 and 697–699 (GNG) each bind GTP.

This sequence belongs to the adenylosuccinate synthetase family. As to quaternary structure, homodimer. Requires Mg(2+) as cofactor.

It is found in the cytoplasm. The enzyme catalyses IMP + L-aspartate + GTP = N(6)-(1,2-dicarboxyethyl)-AMP + GDP + phosphate + 2 H(+). Its pathway is purine metabolism; AMP biosynthesis via de novo pathway; AMP from IMP: step 1/2. Plays an important role in the salvage pathway for purine nucleotide biosynthesis. Catalyzes the first committed step in the biosynthesis of AMP from IMP. In Leishmania infantum, this protein is Adenylosuccinate synthetase.